The sequence spans 166 residues: CDP-archaeol synthase (166 aa).

A run of 5 helical transmembrane segments spans residues 7–27 (LLLS…GPFI), 55–75 (LIVA…FFTA), 78–98 (TLIS…GAFI), 116–136 (LDFV…ITWY), and 138–158 (FLFI…VAYL).

It belongs to the CDP-archaeol synthase family. It depends on Mg(2+) as a cofactor.

It localises to the cell membrane. It carries out the reaction 2,3-bis-O-(geranylgeranyl)-sn-glycerol 1-phosphate + CTP + H(+) = CDP-2,3-bis-O-(geranylgeranyl)-sn-glycerol + diphosphate. Its pathway is membrane lipid metabolism; glycerophospholipid metabolism. In terms of biological role, catalyzes the formation of CDP-2,3-bis-(O-geranylgeranyl)-sn-glycerol (CDP-archaeol) from 2,3-bis-(O-geranylgeranyl)-sn-glycerol 1-phosphate (DGGGP) and CTP. This reaction is the third ether-bond-formation step in the biosynthesis of archaeal membrane lipids. The polypeptide is CDP-archaeol synthase (Saccharolobus islandicus (strain L.S.2.15 / Lassen #1) (Sulfolobus islandicus)).